The primary structure comprises 213 residues: 5-oxoprolinase subunit B (213 aa).

Belongs to the PxpB family. In terms of assembly, forms a complex composed of PxpA, PxpB and PxpC.

It carries out the reaction 5-oxo-L-proline + ATP + 2 H2O = L-glutamate + ADP + phosphate + H(+). In terms of biological role, catalyzes the cleavage of 5-oxoproline to form L-glutamate coupled to the hydrolysis of ATP to ADP and inorganic phosphate. The polypeptide is 5-oxoprolinase subunit B (Haemophilus influenzae (strain ATCC 51907 / DSM 11121 / KW20 / Rd)).